The following is a 635-amino-acid chain: Glycosyltransferase-like protein gnt13 (635 aa).

The Cytoplasmic portion of the chain corresponds to 1–18; sequence MNINTLIINFNKVKRMKN. A helical; Signal-anchor for type II membrane protein transmembrane segment spans residues 19 to 38; the sequence is FLILTLLVVMVVVFLQGPTL. Over 39–635 the chain is Extracellular; that stretch reads MINNSGQGMG…PNECFSDHHW (597 aa). N-linked (GlcNAc...) asparagine glycans are attached at residues Asn41 and Asn179. Disordered regions lie at residues 300–358 and 389–458; these read NINN…NNID and NIDN…NNEP. Positions 389–456 are enriched in low complexity; the sequence is NIDNNNSNYN…NNNNNNNNNN (68 aa). N-linked (GlcNAc...) asparagine glycans are attached at residues Asn393 and Asn535.

This sequence belongs to the glycosyltransferase 8 family. Highly divergent.

It localises to the membrane. This is Glycosyltransferase-like protein gnt13 (gnt13) from Dictyostelium discoideum (Social amoeba).